The primary structure comprises 210 residues: Probable nicotinate-nucleotide adenylyltransferase (210 aa).

This sequence belongs to the NadD family.

The enzyme catalyses nicotinate beta-D-ribonucleotide + ATP + H(+) = deamido-NAD(+) + diphosphate. The protein operates within cofactor biosynthesis; NAD(+) biosynthesis; deamido-NAD(+) from nicotinate D-ribonucleotide: step 1/1. Its function is as follows. Catalyzes the reversible adenylation of nicotinate mononucleotide (NaMN) to nicotinic acid adenine dinucleotide (NaAD). The sequence is that of Probable nicotinate-nucleotide adenylyltransferase from Vesicomyosocius okutanii subsp. Calyptogena okutanii (strain HA).